The following is a 476-amino-acid chain: Glycogen synthase (476 aa).

Residue Lys-15 participates in ADP-alpha-D-glucose binding.

It belongs to the glycosyltransferase 1 family. Bacterial/plant glycogen synthase subfamily.

The catalysed reaction is [(1-&gt;4)-alpha-D-glucosyl](n) + ADP-alpha-D-glucose = [(1-&gt;4)-alpha-D-glucosyl](n+1) + ADP + H(+). Its pathway is glycan biosynthesis; glycogen biosynthesis. In terms of biological role, synthesizes alpha-1,4-glucan chains using ADP-glucose. In Bacillus cereus (strain ZK / E33L), this protein is Glycogen synthase.